The chain runs to 205 residues: Cytochrome c biogenesis ATP-binding export protein CcmA 2 (205 aa).

In terms of domain architecture, ABC transporter spans 2–205 (LEARDLHCER…LALTGGEAGL (204 aa)). 34–41 (GGNGAGKT) contacts ATP.

Belongs to the ABC transporter superfamily. CcmA exporter (TC 3.A.1.107) family. In terms of assembly, the complex is composed of two ATP-binding proteins (CcmA) and two transmembrane proteins (CcmB).

The protein resides in the cell inner membrane. The enzyme catalyses heme b(in) + ATP + H2O = heme b(out) + ADP + phosphate + H(+). Part of the ABC transporter complex CcmAB involved in the biogenesis of c-type cytochromes; once thought to export heme, this seems not to be the case, but its exact role is uncertain. Responsible for energy coupling to the transport system. This is Cytochrome c biogenesis ATP-binding export protein CcmA 2 from Salmonella paratyphi A (strain ATCC 9150 / SARB42).